A 603-amino-acid polypeptide reads, in one-letter code: DNA mismatch repair protein MutL (603 aa).

It belongs to the DNA mismatch repair MutL/HexB family.

This protein is involved in the repair of mismatches in DNA. It is required for dam-dependent methyl-directed DNA mismatch repair. May act as a 'molecular matchmaker', a protein that promotes the formation of a stable complex between two or more DNA-binding proteins in an ATP-dependent manner without itself being part of a final effector complex. In Sphingopyxis alaskensis (strain DSM 13593 / LMG 18877 / RB2256) (Sphingomonas alaskensis), this protein is DNA mismatch repair protein MutL.